A 446-amino-acid polypeptide reads, in one-letter code: Phosphoglucosamine mutase (446 aa).

Serine 103 acts as the Phosphoserine intermediate in catalysis. Residues serine 103, aspartate 242, aspartate 244, and aspartate 246 each coordinate Mg(2+). Serine 103 is modified (phosphoserine).

This sequence belongs to the phosphohexose mutase family. Requires Mg(2+) as cofactor. Post-translationally, activated by phosphorylation.

The catalysed reaction is alpha-D-glucosamine 1-phosphate = D-glucosamine 6-phosphate. Catalyzes the conversion of glucosamine-6-phosphate to glucosamine-1-phosphate. The polypeptide is Phosphoglucosamine mutase (Vibrio campbellii (strain ATCC BAA-1116)).